The following is a 798-amino-acid chain: Bromodomain-containing protein 2 (798 aa).

Methionine 1 is modified (N-acetylmethionine). The segment at 1 to 21 is disordered; that stretch reads MLQNVTPHKLPGEGNAGLLGL. Residue threonine 6 is modified to Phosphothreonine. Serine 36 is subject to Phosphoserine. The disordered stretch occupies residues 53–72; that stretch reads LQLAPANPPPPEVSNPKKPG. The 107-residue stretch at 73–179 folds into the Bromo 1 domain; it reads RVTNQLQYLH…KIFLQKVASM (107 aa). Positions 111, 154, 155, 156, 159, and 160 each coordinate a protein. Disordered stretches follow at residues 267 to 348, 455 to 648, and 735 to 798; these read PPAQ…LSEQ, EPLE…KRQL, and EKRL…SDSG. Low complexity predominate over residues 284 to 297; that stretch reads TTTPTPTAILAPGS. Serine 297, serine 300, and serine 304 each carry phosphoserine. The span at 315-331 shows a compositional bias: basic and acidic residues; that stretch reads MRRESGRPIKPPRKDLP. In terms of domain architecture, Bromo 2 spans 343–452; that stretch reads GKLSEQLKHC…DVFEFRYAKM (110 aa). Positions 480–512 are enriched in acidic residues; it reads SSEESSSESSSEEEEEEDEEDEEEESESSDSEE. Basic residues predominate over residues 542–564; the sequence is KPKRKREKKEKKKKRKAEKHRGR. Positions 553–557 match the Nuclear localization signal motif; sequence KKKRK. In terms of domain architecture, NET spans 630-712; that stretch reads DSEEEEESRP…SCLRKKPRKP (83 aa). Serine 631 carries the phosphoserine modification. Positions 637 to 648 are enriched in basic and acidic residues; that stretch reads SRPMSYDEKRQL. Positions 772–792 are enriched in low complexity; it reads SASSSSSDSSSSSSSSSSSDT.

The protein belongs to the BET family. In terms of assembly, homodimer. Interacts with E2F1. Interacts with (acetylated) STAT3; promoting STAT3 recruitment to chromatin. Interacts with CTCF; promoting BRD2 recruitment to chromatin.

It is found in the nucleus. Its subcellular location is the chromosome. Functionally, chromatin reader protein that specifically recognizes and binds histone H4 acetylated at 'Lys-5' and 'Lys-12' (H4K5ac and H4K12ac, respectively), thereby controlling gene expression and remodeling chromatin structures. Recruits transcription factors and coactivators to target gene sites, and activates RNA polymerase II machinery for transcriptional elongation. Plays a key role in genome compartmentalization via its association with CTCF and cohesin: recruited to chromatin by CTCF and promotes formation of topologically associating domains (TADs) via its ability to bind acetylated histones, contributing to CTCF boundary formation and enhancer insulation. Also recognizes and binds acetylated non-histone proteins, such as STAT3. Involved in inflammatory response by regulating differentiation of naive CD4(+) T-cells into T-helper Th17: recognizes and binds STAT3 acetylated at 'Lys-87', promoting STAT3 recruitment to chromatin. In addition to acetylated lysines, also recognizes and binds lysine residues on histones that are both methylated and acetylated on the same side chain to form N6-acetyl-N6-methyllysine (Kacme), an epigenetic mark of active chromatin associated with increased transcriptional initiation. Specifically binds histone H4 acetyl-methylated at 'Lys-5' and 'Lys-12' (H4K5acme and H4K12acme, respectively). This chain is Bromodomain-containing protein 2 (Brd2), found in Rattus norvegicus (Rat).